The primary structure comprises 468 residues: 6-phospho-beta-galactosidase (468 aa).

The D-galactose 6-phosphate site is built by Gln-19, His-116, Asn-159, Glu-160, and Asn-297. The active-site Proton donor is Glu-160. Glu-375 (nucleophile) is an active-site residue. Residues Ser-428, Trp-429, Lys-435, and Tyr-437 each contribute to the D-galactose 6-phosphate site.

Belongs to the glycosyl hydrolase 1 family.

The catalysed reaction is a 6-phospho-beta-D-galactoside + H2O = D-galactose 6-phosphate + an alcohol. It functions in the pathway carbohydrate metabolism; lactose degradation; D-galactose 6-phosphate and beta-D-glucose from lactose 6-phosphate: step 1/1. This is 6-phospho-beta-galactosidase from Streptococcus sanguinis (strain SK36).